Here is a 150-residue protein sequence, read N- to C-terminus: Protein E6 (150 aa).

2 zinc fingers span residues 31 to 67 (CVFCRKTLSTAEVYAFQYKSLYIVWRGQFPFAACACC) and 104 to 140 (CYLCHKPLCEVEKLRHILQKARFIKLNSSWKGRCFHC).

It belongs to the papillomaviridae E6 protein family. In terms of assembly, forms homodimers. Interacts with ubiquitin-protein ligase UBE3A/E6-AP; this interaction stimulates UBE3A ubiquitin activity. Interacts with host TP53 and EP300; this interaction inhibits TP53 activity.

The protein resides in the host cytoplasm. It localises to the host nucleus. In terms of biological role, plays a major role in the induction and maintenance of cellular transformation. E6 associates with host UBE3A/E6-AP ubiquitin-protein ligase and modulates its activity. Sequesters tumor suppressor TP53 in the host cytoplasm and modulates its activity by interacting with host EP300 that results in the reduction of TP53 acetylation and activation. In turn, apoptosis induced by DNA damage is inhibited. E6 also protects host keratinocytes from apoptosis by mediating the degradation of host BAK1. May also inhibit host immune response. This chain is Protein E6, found in Human papillomavirus 13.